Here is a 295-residue protein sequence, read N- to C-terminus: Small ribosomal subunit protein uS2 (295 aa).

The tract at residues 261-295 (QAKKFSKTKNIDEETNTEFEQVLNDADENKNSDNA) is disordered.

This sequence belongs to the universal ribosomal protein uS2 family.

This Rickettsia rickettsii (strain Sheila Smith) protein is Small ribosomal subunit protein uS2.